Here is a 177-residue protein sequence, read N- to C-terminus: ATP synthase subunit delta (177 aa).

Belongs to the ATPase delta chain family. As to quaternary structure, F-type ATPases have 2 components, F(1) - the catalytic core - and F(0) - the membrane proton channel. F(1) has five subunits: alpha(3), beta(3), gamma(1), delta(1), epsilon(1). F(0) has three main subunits: a(1), b(2) and c(10-14). The alpha and beta chains form an alternating ring which encloses part of the gamma chain. F(1) is attached to F(0) by a central stalk formed by the gamma and epsilon chains, while a peripheral stalk is formed by the delta and b chains.

It localises to the cell inner membrane. Functionally, f(1)F(0) ATP synthase produces ATP from ADP in the presence of a proton or sodium gradient. F-type ATPases consist of two structural domains, F(1) containing the extramembraneous catalytic core and F(0) containing the membrane proton channel, linked together by a central stalk and a peripheral stalk. During catalysis, ATP synthesis in the catalytic domain of F(1) is coupled via a rotary mechanism of the central stalk subunits to proton translocation. This protein is part of the stalk that links CF(0) to CF(1). It either transmits conformational changes from CF(0) to CF(1) or is implicated in proton conduction. The protein is ATP synthase subunit delta of Vibrio vulnificus (strain CMCP6).